A 954-amino-acid polypeptide reads, in one-letter code: Glycine dehydrogenase (decarboxylating) (954 aa).

The residue at position 699 (Lys699) is an N6-(pyridoxal phosphate)lysine.

Belongs to the GcvP family. In terms of assembly, the glycine cleavage system is composed of four proteins: P, T, L and H. Pyridoxal 5'-phosphate is required as a cofactor.

The enzyme catalyses N(6)-[(R)-lipoyl]-L-lysyl-[glycine-cleavage complex H protein] + glycine + H(+) = N(6)-[(R)-S(8)-aminomethyldihydrolipoyl]-L-lysyl-[glycine-cleavage complex H protein] + CO2. In terms of biological role, the glycine cleavage system catalyzes the degradation of glycine. The P protein binds the alpha-amino group of glycine through its pyridoxal phosphate cofactor; CO(2) is released and the remaining methylamine moiety is then transferred to the lipoamide cofactor of the H protein. The sequence is that of Glycine dehydrogenase (decarboxylating) from Nitrobacter winogradskyi (strain ATCC 25391 / DSM 10237 / CIP 104748 / NCIMB 11846 / Nb-255).